We begin with the raw amino-acid sequence, 674 residues long: Protein asunder (674 aa).

The stretch at 516-538 (HKAKDQYRLLYRELEQLIQLNAS) forms a coiled coil. Positions 601 to 607 (LKASKRR) match the Nuclear localization signal (NLS) motif.

The protein belongs to the Integrator subunit 13 family. In terms of assembly, belongs to the multiprotein complex Integrator, at least composed of IntS1, IntS2, IntS3, IntS4, omd/IntS5, IntS6, defl/IntS7, IntS8, IntS9, IntS10, IntS11, IntS12, asun/IntS13, IntS14 and IntS15. The core complex associates with protein phosphatase 2A subunits mts/PP2A and Pp2A-29B, to form the Integrator-PP2A (INTAC) complex. In terms of processing, phosphorylated.

The protein resides in the nucleus. It localises to the cytoplasm. The protein localises to the perinuclear region. Component of the integrator complex, a multiprotein complex that terminates RNA polymerase II (Pol II) transcription in the promoter-proximal region of genes. The integrator complex provides a quality checkpoint during transcription elongation by driving premature transcription termination of transcripts that are unfavorably configured for transcriptional elongation: the complex terminates transcription by (1) catalyzing dephosphorylation of the C-terminal domain (CTD) of Pol II subunit Polr2A/Rbp1 and Spt5, and (2) degrading the exiting nascent RNA transcript via endonuclease activity. The integrator complex is also involved in the 3'-end processing of the U7 snRNA, and also the spliceosomal snRNAs U1, U2, U4 and U5. This Drosophila persimilis (Fruit fly) protein is Protein asunder (asun).